The sequence spans 105 residues: Large ribosomal subunit protein uL24 (105 aa).

This sequence belongs to the universal ribosomal protein uL24 family. As to quaternary structure, part of the 50S ribosomal subunit.

In terms of biological role, one of two assembly initiator proteins, it binds directly to the 5'-end of the 23S rRNA, where it nucleates assembly of the 50S subunit. One of the proteins that surrounds the polypeptide exit tunnel on the outside of the subunit. The chain is Large ribosomal subunit protein uL24 from Staphylococcus aureus (strain Mu3 / ATCC 700698).